We begin with the raw amino-acid sequence, 398 residues long: Putative tyrosine-protein phosphatase C15H7.3 (398 aa).

Residues Met-1–Ser-15 show a composition bias toward basic residues. The disordered stretch occupies residues Met-1 to Lys-114. Residues Gly-18–Gln-40 are compositionally biased toward basic and acidic residues. Basic residues predominate over residues Lys-41–Gly-50. Residues Gly-55 to Thr-73 are compositionally biased toward polar residues. The segment covering Thr-74–Lys-114 has biased composition (basic and acidic residues). The region spanning Thr-125–Trp-376 is the Tyrosine-protein phosphatase domain.

Belongs to the protein-tyrosine phosphatase family. Non-receptor class subfamily.

It carries out the reaction O-phospho-L-tyrosyl-[protein] + H2O = L-tyrosyl-[protein] + phosphate. The chain is Putative tyrosine-protein phosphatase C15H7.3 from Caenorhabditis elegans.